The primary structure comprises 171 residues: UPF0398 protein M28_Spy1394 (171 aa).

It belongs to the UPF0398 family.

This Streptococcus pyogenes serotype M28 (strain MGAS6180) protein is UPF0398 protein M28_Spy1394.